The primary structure comprises 132 residues: Sec-independent protein translocase protein TatB (132 aa).

The chain crosses the membrane as a helical span at residues 2–22 (FDGIGFMELLLIGILGLVVLG). The disordered stretch occupies residues 68–132 (ENQGLKDLSP…VSANPDKSNR (65 aa)). Positions 102-122 (TPSASSSAPSESTPSEAPTAE) are enriched in low complexity.

The protein belongs to the TatB family. As to quaternary structure, the Tat system comprises two distinct complexes: a TatABC complex, containing multiple copies of TatA, TatB and TatC subunits, and a separate TatA complex, containing only TatA subunits. Substrates initially bind to the TatABC complex, which probably triggers association of the separate TatA complex to form the active translocon.

The protein localises to the cell inner membrane. In terms of biological role, part of the twin-arginine translocation (Tat) system that transports large folded proteins containing a characteristic twin-arginine motif in their signal peptide across membranes. Together with TatC, TatB is part of a receptor directly interacting with Tat signal peptides. TatB may form an oligomeric binding site that transiently accommodates folded Tat precursor proteins before their translocation. The polypeptide is Sec-independent protein translocase protein TatB (Shewanella woodyi (strain ATCC 51908 / MS32)).